Reading from the N-terminus, the 340-residue chain is Galactoside alpha-(1,2)-fucosyltransferase 2 (340 aa).

The Cytoplasmic segment spans residues 1–7 (MLSMQAS). A helical; Signal-anchor for type II membrane protein transmembrane segment spans residues 8 to 28 (FFFPTGPFILFVFTASTIFHL). Residues 29 to 340 (QQRMVKIQPT…EADLSPLLKH (312 aa)) are Lumenal-facing. N-linked (GlcNAc...) asparagine glycosylation is found at Asn-185, Asn-251, Asn-279, and Asn-305.

The protein resides in the golgi apparatus. Its subcellular location is the golgi stack membrane. It carries out the reaction a beta-D-galactosyl-(1-&gt;3)-N-acetyl-beta-D-glucosaminyl derivative + GDP-beta-L-fucose = an alpha-L-Fuc-(1-&gt;2)-beta-D-Gal-(1-&gt;3)-beta-D-GlcNAc derivative + GDP + H(+). The catalysed reaction is a beta-D-galactosyl-(1-&gt;4)-N-acetyl-beta-D-glucosaminyl derivative + GDP-beta-L-fucose = an alpha-L-Fuc-(1-&gt;2)-beta-D-Gal-(1-&gt;4)-beta-D-GlcNAc derivative + GDP + H(+). It catalyses the reaction a neolactoside nLc4Cer + GDP-beta-L-fucose = a neolactoside IV(2)-alpha-Fuc-nLc4Cer + GDP + H(+). The enzyme catalyses a neolactoside nLc4Cer(d18:1(4E)) + GDP-beta-L-fucose = a neolactoside IV(2)-alpha-Fuc-nLc4Cer(d18:1(4E)) + GDP + H(+). It carries out the reaction a ganglioside GM1 + GDP-beta-L-fucose = a ganglioside Fuc-GM1 + GDP + H(+). The catalysed reaction is a ganglioside GA1 + GDP-beta-L-fucose = a ganglioside Fuc-GA1 + GDP + H(+). It catalyses the reaction Lc4Cer + GDP-beta-L-fucose = alpha-L-fucosyl-(1-&gt;2)-beta-D-galactosyl-(1-&gt;3)-N-acetyl-beta-D-glucosaminyl-(1-&gt;3)-beta-D-galactosyl-(1-&gt;4)-beta-D-glucosyl-(1&lt;-&gt;1')-ceramide + GDP + H(+). The enzyme catalyses a beta-D-Gal-(1-&gt;3)-beta-D-GlcNAc-(1-&gt;3)-beta-D-Gal-(1-&gt;4)-beta-D-Glc-(1&lt;-&gt;1')-Cer(d18:1(4E)) + GDP-beta-L-fucose = alpha-L-fucosyl-(1-&gt;2)- beta-D-galactosyl-(1-&gt;3)-N-acetyl-beta-D-glucosaminyl-(1-&gt;3)-beta-D-galactosyl-(1-&gt;4)-beta-D-glucosyl-(1&lt;-&gt;1')-N-acylsphing-4-enine + GDP + H(+). It carries out the reaction a ganglioside GD1b + GDP-beta-L-fucose = a ganglioside Fuc-GD1b + GDP + H(+). The catalysed reaction is a ganglioside GM1 (d18:1(4E)) + GDP-beta-L-fucose = a ganglioside Fuc-GM1 (d18:1(4E)) + GDP + H(+). It catalyses the reaction a globoside GalGb4Cer (d18:1(4E)) + GDP-beta-L-fucose = a globoside Globo-H (d18:1(4E)) + GDP + H(+). The enzyme catalyses a lactoside III(4)-a-Fuc-Lc4Cer + GDP-beta-L-fucose = a lactoside IV(2),III(4)-a-[Fuc]2-Lc4Cer + GDP + H(+). It carries out the reaction beta-D-galactosyl-(1-&gt;3)-N-acetyl-D-galactosamine + GDP-beta-L-fucose = alpha-L-fucosyl-(1-&gt;2)-beta-D-galactosyl-(1-&gt;3)-N-acetyl-D-galactosamine + GDP + H(+). The protein operates within protein modification; protein glycosylation. Catalyzes the transfer of L-fucose, from a guanosine diphosphate-beta-L-fucose, to the terminal galactose on both O- and N-linked glycans chains of cell surface glycoproteins and glycolipids and the resulting epitope regulates several processes such as cell-cell interaction including host-microbe interaction, cell surface expression and cell proliferation. Preferentially fucosylates gangliosides GA1 and GM1 in the antrum, cecum and colon and in the female reproductive organs. Fucosylated host glycoproteins or glycolipids mediate interaction with intestinal microbiota influencing its composition. Creates a soluble precursor oligosaccharide FuC-alpha ((1,2)Galbeta-) called the H antigen which is an essential substrate for the final step in the soluble ABO blood group antigen synthesis pathway. The protein is Galactoside alpha-(1,2)-fucosyltransferase 2 of Sus scrofa (Pig).